Consider the following 166-residue polypeptide: Large ribosomal subunit protein uL10 (166 aa).

The protein belongs to the universal ribosomal protein uL10 family. Part of the ribosomal stalk of the 50S ribosomal subunit. The N-terminus interacts with L11 and the large rRNA to form the base of the stalk. The C-terminus forms an elongated spine to which L12 dimers bind in a sequential fashion forming a multimeric L10(L12)X complex.

Its function is as follows. Forms part of the ribosomal stalk, playing a central role in the interaction of the ribosome with GTP-bound translation factors. This Streptococcus pyogenes serotype M28 (strain MGAS6180) protein is Large ribosomal subunit protein uL10.